The primary structure comprises 272 residues: Indole-3-glycerol phosphate synthase (272 aa).

Belongs to the TrpC family.

The catalysed reaction is 1-(2-carboxyphenylamino)-1-deoxy-D-ribulose 5-phosphate + H(+) = (1S,2R)-1-C-(indol-3-yl)glycerol 3-phosphate + CO2 + H2O. It participates in amino-acid biosynthesis; L-tryptophan biosynthesis; L-tryptophan from chorismate: step 4/5. This Mycobacteroides abscessus (strain ATCC 19977 / DSM 44196 / CCUG 20993 / CIP 104536 / JCM 13569 / NCTC 13031 / TMC 1543 / L948) (Mycobacterium abscessus) protein is Indole-3-glycerol phosphate synthase.